The following is a 148-amino-acid chain: Large ribosomal subunit protein uL15 (148 aa).

The disordered stretch occupies residues 1–51 (MNLSNLKPAEGSTKTRKRIGRGPGSGLGGTSTRGHKGAKSRSGYSKKIGFE). A compositionally biased stretch (gly residues) spans 21–31 (RGPGSGLGGTS).

The protein belongs to the universal ribosomal protein uL15 family. As to quaternary structure, part of the 50S ribosomal subunit.

Binds to the 23S rRNA. The sequence is that of Large ribosomal subunit protein uL15 from Phocaeicola vulgatus (strain ATCC 8482 / DSM 1447 / JCM 5826 / CCUG 4940 / NBRC 14291 / NCTC 11154) (Bacteroides vulgatus).